The chain runs to 418 residues: UDP-N-acetylglucosamine 1-carboxyvinyltransferase (418 aa).

22–23 (KN) contributes to the phosphoenolpyruvate binding site. Residue R91 participates in UDP-N-acetyl-alpha-D-glucosamine binding. C115 serves as the catalytic Proton donor. C115 carries the post-translational modification 2-(S-cysteinyl)pyruvic acid O-phosphothioketal. UDP-N-acetyl-alpha-D-glucosamine is bound by residues 120–124 (RPVDL), D305, and I327.

This sequence belongs to the EPSP synthase family. MurA subfamily.

Its subcellular location is the cytoplasm. It carries out the reaction phosphoenolpyruvate + UDP-N-acetyl-alpha-D-glucosamine = UDP-N-acetyl-3-O-(1-carboxyvinyl)-alpha-D-glucosamine + phosphate. It participates in cell wall biogenesis; peptidoglycan biosynthesis. Its function is as follows. Cell wall formation. Adds enolpyruvyl to UDP-N-acetylglucosamine. This Wigglesworthia glossinidia brevipalpis protein is UDP-N-acetylglucosamine 1-carboxyvinyltransferase.